A 157-amino-acid polypeptide reads, in one-letter code: Vesicle transport protein SFT2B (157 aa).

M1 is subject to N-acetylmethionine. Residues 1–36 lie on the Cytoplasmic side of the membrane; it reads MDKLKKVLSGQDTEDRSGLSEVVESSSLSWSTRIKG. The residue at position 9 (S9) is a Phosphoserine. The chain crosses the membrane as a helical span at residues 37-57; sequence FIVCFALGILCSLLGTLLLWV. Residues 58–61 are Lumenal-facing; it reads SRKG. A helical membrane pass occupies residues 62–82; the sequence is LFAVFYTLGNITSIGSTMFLM. Residues 83–96 are Cytoplasmic-facing; sequence GPLKQLKRMFEPTR. Residues 97–117 form a helical membrane-spanning segment; that stretch reads LIATILVLLFFVLTLCSAFLW. Topologically, residues 118–120 are lumenal; that stretch reads NKG. The helical transmembrane segment at 121–141 threads the bilayer; sequence LALIFCILQSLALTWYSLSYI. The Cytoplasmic portion of the chain corresponds to 142 to 157; it reads PYARDAVKKCFAVCLT.

This sequence belongs to the SFT2 family.

Its subcellular location is the membrane. Its function is as follows. May be involved in fusion of retrograde transport vesicles derived from an endocytic compartment with the Golgi complex. This Rattus norvegicus (Rat) protein is Vesicle transport protein SFT2B.